Here is a 566-residue protein sequence, read N- to C-terminus: Medium-chain fatty-acid--CoA ligase (566 aa).

231-242 (ILASERAYCARL) is an ATP binding site.

The protein belongs to the ATP-dependent AMP-binding enzyme family. In terms of assembly, homodimer. Mg(2+) is required as a cofactor.

Its subcellular location is the cell membrane. It catalyses the reaction hexanoate + ATP + CoA = hexanoyl-CoA + AMP + diphosphate. The catalysed reaction is octanoate + ATP + CoA = octanoyl-CoA + AMP + diphosphate. It carries out the reaction dodecanoate + ATP + CoA = dodecanoyl-CoA + AMP + diphosphate. Its pathway is lipid metabolism; fatty acid beta-oxidation. In terms of biological role, catalyzes the esterification, concomitant with transport, of exogenous fatty acids into metabolically active CoA thioesters for subsequent degradation or incorporation into phospholipids. Is maximally active on C6:0, C8:0 and C12:0 fatty acids, while has a low activity on C14-C18 chain length fatty acids. Is involved in the anaerobic beta-oxidative degradation of fatty acids, which allows anaerobic growth of E.coli on fatty acids as a sole carbon and energy source in the presence of nitrate or fumarate as a terminal electron acceptor. Can functionally replace FadD under anaerobic conditions. In Escherichia coli (strain K12), this protein is Medium-chain fatty-acid--CoA ligase.